The sequence spans 347 residues: Purine-rich element-binding protein gamma (347 aa).

Disordered regions lie at residues 1–34 and 133–169; these read MERA…YPQA and GHRQ…HPHS. Positions 9-24 are enriched in gly residues; that stretch reads GGGGRGRGGKNVGGSG. The DNA-binding element occupies 51–293; the sequence is AGGAAEIQEL…GIFLKVSEVR (243 aa). Residues 134–146 are compositionally biased toward basic and acidic residues; the sequence is HRQEHGHSKEQGS. A phosphoserine mark is found at S160, S163, and S339.

It belongs to the PUR DNA-binding protein family. In terms of tissue distribution, isoform 1 is expressed in testis and glioblastoma. Isoform 2 is expressed in fetal lung.

Its subcellular location is the nucleus. In Homo sapiens (Human), this protein is Purine-rich element-binding protein gamma (PURG).